The sequence spans 214 residues: MEFFLDTANLEEIRKAKAQGLMDGVTTNPTLLSREGGDWRKQAEAICAEVEGPVSLEVVGESAEEMIREAEDLASFGDNVVIKVPMTNEGLVATESLYRKGVKTNVTLVFSPLQALLAAKAGATYVSPFVGRLDGIAHDGMELIRQIRTIFDNYDFPTKILVASIRHPMHVLDSALIGADVATIPYSVISQLAAHPLTDKGLAAFNADWEKLTK.

The active-site Schiff-base intermediate with substrate is the lysine 83.

Belongs to the transaldolase family. Type 3B subfamily.

Its subcellular location is the cytoplasm. The catalysed reaction is D-sedoheptulose 7-phosphate + D-glyceraldehyde 3-phosphate = D-erythrose 4-phosphate + beta-D-fructose 6-phosphate. The protein operates within carbohydrate degradation; pentose phosphate pathway; D-glyceraldehyde 3-phosphate and beta-D-fructose 6-phosphate from D-ribose 5-phosphate and D-xylulose 5-phosphate (non-oxidative stage): step 2/3. Transaldolase is important for the balance of metabolites in the pentose-phosphate pathway. The chain is Probable transaldolase from Maridesulfovibrio salexigens (strain ATCC 14822 / DSM 2638 / NCIMB 8403 / VKM B-1763) (Desulfovibrio salexigens).